The chain runs to 257 residues: UPF0246 protein RSKD131_2757 (257 aa).

It belongs to the UPF0246 family.

The chain is UPF0246 protein RSKD131_2757 from Cereibacter sphaeroides (strain KD131 / KCTC 12085) (Rhodobacter sphaeroides).